A 1088-amino-acid polypeptide reads, in one-letter code: DNA-directed RNA polymerase subunit beta (1088 aa).

The protein belongs to the RNA polymerase beta chain family. In plastids the minimal PEP RNA polymerase catalytic core is composed of four subunits: alpha, beta, beta', and beta''. When a (nuclear-encoded) sigma factor is associated with the core the holoenzyme is formed, which can initiate transcription.

The protein resides in the plastid. The protein localises to the chloroplast. It carries out the reaction RNA(n) + a ribonucleoside 5'-triphosphate = RNA(n+1) + diphosphate. DNA-dependent RNA polymerase catalyzes the transcription of DNA into RNA using the four ribonucleoside triphosphates as substrates. This is DNA-directed RNA polymerase subunit beta from Chlorokybus atmophyticus (Soil alga).